The primary structure comprises 295 residues: CBY1-interacting BAR domain-containing protein 1 (295 aa).

The N-terminal 49 residues, 1 to 49 (MMSRTPDARARDTQTKQIQENITSVEKHFGDLCQLFAAYVRKTARLRDK), are a transit peptide targeting the mitochondrion. Positions 12–222 (DTQTKQIQEN…NVDEEGDLEV (211 aa)) are BAR-like. Residues 111 to 185 (KREDLKQTQS…KQKIRDIKKV (75 aa)) are a coiled coil. Over residues 243–265 (SKLSLNRTGTSMSKSGTMQSRTS) the composition is skewed to polar residues. The interval 243 to 295 (SKLSLNRTGTSMSKSGTMQSRTSSRQRKRDDEEDEEEDDEDEDDLEEVTDDEH) is disordered. A compositionally biased stretch (acidic residues) spans 273-295 (DEEDEEEDDEDEDDLEEVTDDEH).

The protein belongs to the CIBAR family.

The protein resides in the cytoplasm. It is found in the cytoskeleton. It localises to the microtubule organizing center. Its subcellular location is the centrosome. The protein localises to the centriole. The protein resides in the cell projection. It is found in the cilium. It localises to the nucleus. Its subcellular location is the mitochondrion inner membrane. The protein localises to the flagellum. Plays a critical role in regulating mitochondrial ultrastructure and function by maintaining the integrity of mitochondrial morphology, particularly the organization of cristae. Plays a crucial role in ciliogenesis. Plays a key role in the correct positioning of the annulus, a septin-based ring structure in the sperm flagellum, serving both as a physical barrier and a membrane diffusion barrier that separates the midpiece (MP) from the principal piece (PP). This Danio rerio (Zebrafish) protein is CBY1-interacting BAR domain-containing protein 1 (cibar1).